The primary structure comprises 302 residues: Deoxyhypusine hydroxylase (302 aa).

Residue Met-1 is modified to N-acetylmethionine. HEAT-like PBS-type repeat units lie at residues 54–80 (LKHE…VLQD), 87–113 (VRHE…YSTD), 175–201 (ERYR…GLQC), 206–232 (FRHE…TLAR), and 239–265 (VRHE…HIED). Fe cation is bound by residues His-56, His-89, and Glu-90. Residues His-208, His-241, and Glu-242 each coordinate Fe cation.

The protein belongs to the deoxyhypusine hydroxylase family. The cofactor is Fe(2+).

It carries out the reaction [eIF5A protein]-deoxyhypusine + AH2 + O2 = [eIF5A protein]-hypusine + A + H2O. The protein operates within protein modification; eIF5A hypusination. In terms of biological role, catalyzes the hydroxylation of the N(6)-(4-aminobutyl)-L-lysine intermediate produced by deoxyhypusine synthase/DHPS on a critical lysine of the eukaryotic translation initiation factor 5A/eIF-5A. This is the second step of the post-translational modification of that lysine into an unusual amino acid residue named hypusine. Hypusination is unique to mature eIF-5A factor and is essential for its function. This Mus musculus (Mouse) protein is Deoxyhypusine hydroxylase.